The chain runs to 398 residues: Basic helix-loop-helix neural transcription factor TAP (398 aa).

2 disordered regions span residues 35-59 and 102-144; these read ETEAQLSSRRRLDFGTPPTPAIPQP and RATN…RSRS. Residues 127-141 show a composition bias toward basic residues; the sequence is RPKRKYAVGKNRVTR. The bHLH domain maps to 154–206; it reads FRRMKANDRERNRMHNLNDALEKLRVTLPSLPEETKLTKIEILRFAHNYIFAL. Disordered stretches follow at residues 265–333 and 361–398; these read AQHQ…QQFS and QQSSFYSQTPPWKDYPEDQAHVHPVPHQHSYKNFAPQV. Over residues 307 to 333 the composition is skewed to low complexity; sequence HQQQQQPHQPHHLQPNPQQESSPQQFS. Residues 361–370 show a composition bias toward polar residues; it reads QQSSFYSQTP.

In terms of tissue distribution, expressed in neuronal and glial precursors during differentiation. In the peripheral nervous system, expression is exclusively in one of the neurons that innervate each larval chemosensory organ. Expressed at a late stage in the development of one type of adult chemosensory organ, the gustatory bristles of the leg, wing and proboscis. Expressed very early in the development of a second type of chemosensory receptors, the olfactory organs of the antenna.

It is found in the nucleus. Functionally, may play a role in the specification of the sugar-sensitive adult gustatory neuron and affect the response to sugar and salt. Regulated by POXN. This chain is Basic helix-loop-helix neural transcription factor TAP (tap), found in Drosophila melanogaster (Fruit fly).